The primary structure comprises 266 residues: 3-methyl-2-oxobutanoate hydroxymethyltransferase (266 aa).

Mg(2+) contacts are provided by aspartate 45 and aspartate 84. Residues 45–46 (DS), aspartate 84, and lysine 113 contribute to the 3-methyl-2-oxobutanoate site. A Mg(2+)-binding site is contributed by glutamate 115. Catalysis depends on glutamate 183, which acts as the Proton acceptor.

This sequence belongs to the PanB family. Homodecamer; pentamer of dimers. The cofactor is Mg(2+).

It localises to the cytoplasm. The enzyme catalyses 3-methyl-2-oxobutanoate + (6R)-5,10-methylene-5,6,7,8-tetrahydrofolate + H2O = 2-dehydropantoate + (6S)-5,6,7,8-tetrahydrofolate. The protein operates within cofactor biosynthesis; (R)-pantothenate biosynthesis; (R)-pantoate from 3-methyl-2-oxobutanoate: step 1/2. In terms of biological role, catalyzes the reversible reaction in which hydroxymethyl group from 5,10-methylenetetrahydrofolate is transferred onto alpha-ketoisovalerate to form ketopantoate. This Coxiella burnetii (strain Dugway 5J108-111) protein is 3-methyl-2-oxobutanoate hydroxymethyltransferase.